The sequence spans 372 residues: N-methyl-L-tryptophan oxidase (372 aa).

4–34 (DLIIIGSGSVGAAAGYYATRAGLNVLMTDAH) is an FAD binding site. Residue cysteine 308 is modified to S-8alpha-FAD cysteine.

Belongs to the MSOX/MTOX family. MTOX subfamily. Monomer. FAD serves as cofactor.

It carries out the reaction N(alpha)-methyl-L-tryptophan + O2 + H2O = L-tryptophan + formaldehyde + H2O2. Its function is as follows. Catalyzes the oxidative demethylation of N-methyl-L-tryptophan. This Escherichia coli (strain SMS-3-5 / SECEC) protein is N-methyl-L-tryptophan oxidase.